The sequence spans 713 residues: Low-density lipoprotein receptor-related protein 10 (713 aa).

The signal sequence occupies residues 1–17 (MLSALPLLFLLLGGALA). Residues 18-441 (RPDRITFPRS…WDCSYALPRK (424 aa)) lie on the Extracellular side of the membrane. Cystine bridges form between Cys29-Cys58 and Cys81-Cys99. The 109-residue stretch at 29-137 (CEAPPAVLSE…QGFLLTYSQD (109 aa)) folds into the CUB 1 domain. Asn57 carries an N-linked (GlcNAc...) asparagine glycan. A glycan (N-linked (GlcNAc...) asparagine) is linked at Asn112. In terms of domain architecture, LDL-receptor class A 1 spans 140 to 176 (LCLQEEFQCLNHRCIPAAQRCDGIDACGDGSDEAGCS). 4 disulfide bridges follow: Cys141–Cys153, Cys148–Cys166, Cys160–Cys175, and Cys193–Cys221. Residues 193–306 (CNLTLEDFYG…RGFNATYHVR (114 aa)) form the CUB 2 domain. N-linked (GlcNAc...) asparagine glycosylation is found at Asn194 and Asn300. LDL-receptor class A domains follow at residues 308-355 (YCLP…EGCP), 356-398 (GCPP…RRCR), and 399-435 (HCQPGNFRCRDEKCVYETWVCDGQPDCTDGSDEWDCS). 9 disulfide bridges follow: Cys309–Cys332, Cys316–Cys345, Cys339–Cys354, Cys357–Cys375, Cys364–Cys388, Cys382–Cys397, Cys400–Cys412, Cys407–Cys425, and Cys419–Cys434. A helical transmembrane segment spans residues 442-462 (VITAAVIGSLVCGLLLVIALG). Residues 463 to 713 (CTCKLYAIRT…VEAEDEPLLA (251 aa)) are Cytoplasmic-facing. The segment at 566-636 (LLPRTNTPAR…TLPALATVSE (71 aa)) is disordered. Thr596 bears the Phosphothreonine mark. Positions 614–626 (PPLPIKTPIPTPS) are enriched in pro residues.

It belongs to the LDLR family. As to expression, highly expressed in heart, lung, liver and liver. Expressed at low level in brain and spleen. Weakly or not expressed in testis and skeletal muscle. In liver, it is expressed in hepatocytes and at higher level in sinusoidal lining. In the kidney, it is expressed in peritubular capillaries. In brain, it is expressed in the epithelium of the choroid plexus ependymal cells of the third ventricle pia matter, and to lesser extent in hippocampal fields CA2 and CA3.

Its subcellular location is the membrane. It localises to the coated pit. Probable receptor, which is involved in the internalization of lipophilic molecules and/or signal transduction. May be involved in the uptake of lipoprotein APOE in liver. The chain is Low-density lipoprotein receptor-related protein 10 (Lrp10) from Mus musculus (Mouse).